The following is a 62-amino-acid chain: Sec-independent protein translocase protein TatA (62 aa).

A helical membrane pass occupies residues 1 to 21; it reads MFGIGIPELLVIFVLILLVFG.

Belongs to the TatA/E family. As to quaternary structure, the Tat system comprises two distinct complexes: a TatABC complex, containing multiple copies of TatA, TatB and TatC subunits, and a separate TatA complex, containing only TatA subunits. Substrates initially bind to the TatABC complex, which probably triggers association of the separate TatA complex to form the active translocon.

Its subcellular location is the cell inner membrane. In terms of biological role, part of the twin-arginine translocation (Tat) system that transports large folded proteins containing a characteristic twin-arginine motif in their signal peptide across membranes. TatA could form the protein-conducting channel of the Tat system. The protein is Sec-independent protein translocase protein TatA of Oleidesulfovibrio alaskensis (strain ATCC BAA-1058 / DSM 17464 / G20) (Desulfovibrio alaskensis).